The primary structure comprises 267 residues: Ubiquinone biosynthesis protein COQ4, mitochondrial (267 aa).

The N-terminal 17 residues, 1-17 (MSRLKIPSQLLRGGRGF), are a transit peptide targeting the mitochondrion. The Zn(2+) site is built by H153, D154, H157, and E169.

The protein belongs to the COQ4 family. Component of a multi-subunit COQ enzyme complex, composed of at least COQ3, COQ4, COQ5, COQ6, COQ7 and COQ9. The cofactor is Zn(2+).

Its subcellular location is the mitochondrion inner membrane. It catalyses the reaction a 4-hydroxy-3-methoxy-5-(all-trans-polyprenyl)benzoate + H(+) = a 2-methoxy-6-(all-trans-polyprenyl)phenol + CO2. It participates in cofactor biosynthesis; ubiquinone biosynthesis. In terms of biological role, lyase that catalyzes the C1-decarboxylation of 4-hydroxy-3-methoxy-5-(all-trans-polyprenyl)benzoic acid into 2-methoxy-6-(all-trans-polyprenyl)phenol during ubiquinone biosynthesis. This chain is Ubiquinone biosynthesis protein COQ4, mitochondrial, found in Arthroderma otae (strain ATCC MYA-4605 / CBS 113480) (Microsporum canis).